Here is a 308-residue protein sequence, read N- to C-terminus: CASP-like protein 4A2 (308 aa).

Positions 1–135 are disordered; the sequence is MALEAQPSPS…APAPAPRVPA (135 aa). The Cytoplasmic segment spans residues 1–161; that stretch reads MALEAQPSPS…KRPTAVLQRT (161 aa). Residues 22 to 31 are compositionally biased toward gly residues; sequence GGAGAPGGSA. The span at 32-44 shows a compositional bias: low complexity; sequence GDADAQARRATSG. 2 stretches are compositionally biased toward pro residues: residues 54–65 and 89–132; these read RRSPPPPFPRTP and FQPP…PAPR. A helical transmembrane segment spans residues 162-182; the sequence is ALVARVAAALLCLAALAVLAA. The Extracellular segment spans residues 183–203; that stretch reads DSRKGFALDSYSNYSQLRYSE. Asn-195 is a glycosylation site (N-linked (GlcNAc...) asparagine). The helical transmembrane segment at 204-224 threads the bilayer; that stretch reads AVNVIGFVYSVLQFFVLADLM. At 225–240 the chain is on the cytoplasmic side; the sequence is RRNKHLNPRRKGDYFD. A helical transmembrane segment spans residues 241–262; it reads FFMDQVLAYLLISSSSSATARV. The Extracellular portion of the chain corresponds to 263-280; the sequence is GDWIDNWGSDPFPKMANS. Asn-279 carries an N-linked (GlcNAc...) asparagine glycan. A helical transmembrane segment spans residues 281–301; that stretch reads SIAISFMAFLVFAISALISAY. Residues 302-308 are Cytoplasmic-facing; that stretch reads NLFRRDI.

Belongs to the Casparian strip membrane proteins (CASP) family. As to quaternary structure, homodimer and heterodimers.

It localises to the cell membrane. This is CASP-like protein 4A2 from Oryza sativa subsp. japonica (Rice).